A 396-amino-acid chain; its full sequence is S-adenosylmethionine synthase 4 (396 aa).

Glutamate 12 lines the Mg(2+) pocket. Position 18 (histidine 18) interacts with ATP. Glutamate 46 contributes to the K(+) binding site. Glutamate 59 and glutamine 102 together coordinate L-methionine. Residues 170 to 172, 238 to 241, aspartate 249, 255 to 256, alanine 272, lysine 276, and lysine 280 contribute to the ATP site; these read DGK, SGRF, and RK. Aspartate 249 serves as a coordination point for L-methionine. L-methionine is bound at residue lysine 280.

This sequence belongs to the AdoMet synthase family. In terms of assembly, homotetramer. The cofactor is Mn(2+). Requires Mg(2+) as cofactor. Co(2+) is required as a cofactor. It depends on K(+) as a cofactor.

It is found in the cytoplasm. It carries out the reaction L-methionine + ATP + H2O = S-adenosyl-L-methionine + phosphate + diphosphate. Its pathway is amino-acid biosynthesis; S-adenosyl-L-methionine biosynthesis; S-adenosyl-L-methionine from L-methionine: step 1/1. Catalyzes the formation of S-adenosylmethionine from methionine and ATP. The reaction comprises two steps that are both catalyzed by the same enzyme: formation of S-adenosylmethionine (AdoMet) and triphosphate, and subsequent hydrolysis of the triphosphate. This chain is S-adenosylmethionine synthase 4 (SAM4), found in Hordeum vulgare (Barley).